Reading from the N-terminus, the 391-residue chain is Probable methanogen homoaconitase large subunit (391 aa).

Positions 275, 333, and 336 each coordinate [4Fe-4S] cluster.

This sequence belongs to the aconitase/IPM isomerase family. LeuC type 2 subfamily. In terms of assembly, heterotetramer of 2 HacA and 2 HacB proteins.

It carries out the reaction (2R)-homocitrate = (2R,3S)-homoisocitrate. The enzyme catalyses (2R)-homocitrate = cis-homoaconitate + H2O. It catalyses the reaction (2R,3S)-homoisocitrate = cis-homoaconitate + H2O. The catalysed reaction is cis-(homo)2aconitate + H2O = (2R,3S)-iso(homo)2citrate. It carries out the reaction cis-(homo)3aconitate + H2O = (2R,3S)-iso(homo)3citrate. The protein operates within organic acid metabolism; 2-oxosuberate biosynthesis. Functionally, component of a hydro-lyase with broad substrate specificity for cis-unsaturated tricarboxylic acids. Catalyzes both the reversible dehydration of (R)-homocitrate ((R)-2-hydroxybutane-1,2,4-tricarboxylate) to produce cis-homoaconitate ((Z)-but-1-ene-1,2,4-tricarboxylate), and its hydration to homoisocitrate ((1R,2S)-1-hydroxybutane-1,2,4-tricarboxylate). Is also able to hydrate the analogous longer chain substrates cis-homo(2)-aconitate, cis-homo(3)-aconitate. These reactions are part of the biosynthesis pathway of coenzyme B. This Methanosarcina mazei (strain ATCC BAA-159 / DSM 3647 / Goe1 / Go1 / JCM 11833 / OCM 88) (Methanosarcina frisia) protein is Probable methanogen homoaconitase large subunit (hacA).